Reading from the N-terminus, the 123-residue chain is Large ribosomal subunit protein uL14 (123 aa).

It belongs to the universal ribosomal protein uL14 family. In terms of assembly, part of the 50S ribosomal subunit. Forms a cluster with proteins L3 and L19. In the 70S ribosome, L14 and L19 interact and together make contacts with the 16S rRNA in bridges B5 and B8.

Binds to 23S rRNA. Forms part of two intersubunit bridges in the 70S ribosome. The protein is Large ribosomal subunit protein uL14 of Proteus mirabilis (strain HI4320).